A 476-amino-acid chain; its full sequence is H2.0-like homeobox protein (476 aa).

3 disordered regions span residues 120-169, 328-401, and 413-476; these read QHLP…PSSK, WRHS…HQTT, and TASS…LAGL. Composition is skewed to low complexity over residues 123–134 and 158–168; these read PQQSPTQQQQPQ and HHSGSAPAPSS. Residues 273 to 332 constitute a DNA-binding region (homeobox); the sequence is RSWSRAVFSNLQRKGLEKRFEIQKYVTKPDRKQLAAMLGLTDAQVKVWFQNRRMKWRHSK. Basic and acidic residues-rich tracts occupy residues 331-346 and 355-368; these read SKEAQAQKDKDKEAGE and EGEREERSPSRSEG. A compositionally biased stretch (acidic residues) spans 369–379; sequence EAESESSDSES. A compositionally biased stretch (basic and acidic residues) spans 386–397; that stretch reads DTERTEGTERSL. The span at 413–434 shows a compositional bias: low complexity; the sequence is TASSSTSGSSFSFSSTSSLGSG. 2 stretches are compositionally biased toward polar residues: residues 435–446 and 455–467; these read NTHVGSASSLGG and HQPSVTSSPQSPE.

This sequence belongs to the H2.0 homeobox family. Expressed in Th1 cells, CD8-positive T-cells, B-cells and NK cells.

It localises to the nucleus. Transcription factor required for TBX21/T-bet-dependent maturation of Th1 cells as well as maintenance of Th1-specific gene expression. Involved in embryogenesis and hematopoiesis. In Mus musculus (Mouse), this protein is H2.0-like homeobox protein (Hlx).